A 278-amino-acid polypeptide reads, in one-letter code: HTH-type transcriptional activator RhaS (278 aa).

One can recognise an HTH araC/xylS-type domain in the interval 174–272 (NLLLAWLEDH…NWSPRDIRQG (99 aa)). 2 consecutive DNA-binding regions (H-T-H motif) follow at residues 191-212 (DAVA…KQQT) and 239-262 (VTDI…RREF).

Binds DNA as a dimer.

The protein localises to the cytoplasm. Activates expression of the rhaBAD and rhaT operons. This Shigella dysenteriae serotype 1 (strain Sd197) protein is HTH-type transcriptional activator RhaS.